The sequence spans 873 residues: Probable beta-glucosidase A (873 aa).

The N-terminal stretch at 1–19 is a signal peptide; the sequence is MRFGWLEVAALTAASVANA. N-linked (GlcNAc...) asparagine glycans are attached at residues Asn-71, Asn-222, and Asn-263. Asp-291 is a catalytic residue. Residues Asn-326, Asn-333, Asn-365, Asn-453, Asn-534, Asn-553, Asn-575, Asn-679, and Asn-725 are each glycosylated (N-linked (GlcNAc...) asparagine). The tract at residues 731 to 764 is disordered; the sequence is DSSDDPNYGWQDSEYIPEGARDGSPQPLLKAGGA.

This sequence belongs to the glycosyl hydrolase 3 family.

It localises to the secreted. It carries out the reaction Hydrolysis of terminal, non-reducing beta-D-glucosyl residues with release of beta-D-glucose.. Its pathway is glycan metabolism; cellulose degradation. Its function is as follows. Beta-glucosidases are one of a number of cellulolytic enzymes involved in the degradation of cellulosic biomass. Catalyzes the last step releasing glucose from the inhibitory cellobiose. The protein is Probable beta-glucosidase A (bglA) of Aspergillus fumigatus (strain ATCC MYA-4609 / CBS 101355 / FGSC A1100 / Af293) (Neosartorya fumigata).